Reading from the N-terminus, the 161-residue chain is Trivalent organoarsenical cleaving enzyme (161 aa).

A VOC domain is found at 2 to 119 (KYAHVGLNVT…DGNEWEFFYT (118 aa)). 2 residues coordinate Fe(2+): histidine 5 and histidine 62. Positions 96 and 97 each coordinate roxarsone (III). Glutamate 115 contributes to the Fe(2+) binding site.

Fe(2+) serves as cofactor.

The enzyme catalyses methylarsonous acid + AH2 + O2 = arsenite + methanol + A + H(+). The catalysed reaction is roxarsone (III) + AH2 + O2 = 4-hydroxy-3-nitrocyclohexa-2,5-dien-1-one + arsenite + A + H(+). It carries out the reaction nitarsone (III) + AH2 + O2 = 4-nitrocyclohexa-2,5-dien-1-one + arsenite + A + H(+). It catalyses the reaction 4-aminophenylarsonous acid + AH2 + O2 = 4-aminocyclohexa-2,5-dien-1-one + arsenite + A. With respect to regulation, inhibited in vitro by reagents that chemically modify histidine residues (diethylpyrocarbonate (DEPC)), aspartate or glutamate residues (1-ethyl-3-(3-(dimethylamino)propyl) carbodiimide (EDC)), or cysteine residues (N-ethylmaleimide (NEM) or iodoacetamide (IAA)). Its function is as follows. Nonheme iron-dependent dioxygenase that can break carbon-arsenic bonds, playing a role in the detoxification of environmental organoarsenical compounds. Catalyzes the oxygen-dependent demethylation of highly toxic methylarsonous acid (MAs(III)) to arsenite, which can then be exported out of the cell. Can also cleave the C-As bond in several trivalent aromatic arsenicals, including roxarsone (III), nitarsone (III) and (4-aminophenyl)arsonous acid. Organoarsenical degradation by this enzyme is proposed to have a significant impact on the arsenic biogeocycle that maintains a balance between organic and inorganic species. In Bacillus sp. (strain MD1), this protein is Trivalent organoarsenical cleaving enzyme.